A 390-amino-acid polypeptide reads, in one-letter code: Alkanesulfonate monooxygenase (390 aa).

The protein belongs to the SsuD family.

The enzyme catalyses an alkanesulfonate + FMNH2 + O2 = an aldehyde + FMN + sulfite + H2O + 2 H(+). Functionally, catalyzes the desulfonation of aliphatic sulfonates. In Cupriavidus taiwanensis (strain DSM 17343 / BCRC 17206 / CCUG 44338 / CIP 107171 / LMG 19424 / R1) (Ralstonia taiwanensis (strain LMG 19424)), this protein is Alkanesulfonate monooxygenase.